The chain runs to 150 residues: Large ribosomal subunit protein uL13 (150 aa).

Residues 129–150 (PEHPHSAQRPQTLQLNPAASSQ) are disordered. Positions 136–150 (QRPQTLQLNPAASSQ) are enriched in polar residues.

Belongs to the universal ribosomal protein uL13 family. In terms of assembly, part of the 50S ribosomal subunit.

Functionally, this protein is one of the early assembly proteins of the 50S ribosomal subunit, although it is not seen to bind rRNA by itself. It is important during the early stages of 50S assembly. This Prochlorococcus marinus (strain MIT 9303) protein is Large ribosomal subunit protein uL13.